A 133-amino-acid chain; its full sequence is UPF0102 protein CYA_0680 (133 aa).

The protein belongs to the UPF0102 family.

The sequence is that of UPF0102 protein CYA_0680 from Synechococcus sp. (strain JA-3-3Ab) (Cyanobacteria bacterium Yellowstone A-Prime).